We begin with the raw amino-acid sequence, 306 residues long: Ribonuclease HIII (306 aa).

The RNase H type-2 domain maps to 87–302; the sequence is WSVVGSDEVG…TKKAEALAKK (216 aa). D93, E94, and D196 together coordinate a divalent metal cation.

This sequence belongs to the RNase HII family. RnhC subfamily. The cofactor is Mn(2+). Mg(2+) serves as cofactor.

The protein localises to the cytoplasm. The enzyme catalyses Endonucleolytic cleavage to 5'-phosphomonoester.. Endonuclease that specifically degrades the RNA of RNA-DNA hybrids. The chain is Ribonuclease HIII from Exiguobacterium sibiricum (strain DSM 17290 / CCUG 55495 / CIP 109462 / JCM 13490 / 255-15).